We begin with the raw amino-acid sequence, 1121 residues long: Anillin (1121 aa).

Met-1 bears the N-acetylmethionine mark. Positions Met-1–Glu-25 are enriched in basic and acidic residues. The tract at residues Met-1–Ser-45 is required for ubiquitination. 3 disordered regions span residues Met-1–Ser-113, Ala-125–Arg-196, and Asp-212–Ile-402. The segment at Met-1–His-154 is interaction with CD2AP. The segment at Met-1–Pro-228 is nuclear localization. Residues Ser-73 and Ser-96 each carry the phosphoserine modification. The span at Ser-96–Pro-109 shows a compositional bias: pro residues. Polar residues predominate over residues Asn-130 to Thr-143. Positions Arg-147 to Ser-157 are enriched in basic and acidic residues. Phosphoserine is present on Ser-180. Thr-192 is subject to Phosphothreonine. Residues His-216–Pro-228 are compositionally biased toward polar residues. Phosphoserine is present on residues Ser-223, Ser-250, and Ser-259. The interval Gly-229–Tyr-671 is interaction with F-actin. Residues Ser-234–Ser-250 are compositionally biased toward low complexity. Low complexity predominate over residues Ser-282 to Ala-298. Positions Glu-303–His-314 are enriched in basic and acidic residues. Residue Thr-316 is modified to Phosphothreonine. Residues Ser-318 and Ser-334 each carry the phosphoserine modification. Phosphothreonine is present on Thr-359. Lys-366 is subject to N6-acetyllysine. Residues Phe-368–Pro-384 are compositionally biased toward basic and acidic residues. Polar residues predominate over residues Lys-391–Ala-401. 2 positions are modified to phosphothreonine: Thr-392 and Thr-396. Residues Ser-414 and Ser-444 each carry the phosphoserine modification. The interval Asn-490 to Lys-511 is disordered. A compositionally biased stretch (polar residues) spans Leu-496–Lys-511. Residues Ser-513, Ser-548, and Ser-556 each carry the phosphoserine modification. A coiled-coil region spans residues Phe-564–Ile-599. Positions Ser-623–Ala-635 are enriched in polar residues. Residues Ser-623–Ser-656 form a disordered region. Residues Ser-637, Ser-653, Ser-656, and Ser-659 each carry the phosphoserine modification. Tyr-666 carries the phosphotyrosine modification. Phosphoserine is present on residues Ser-673, Ser-683, Ser-787, and Ser-924. Residues Gln-725–Pro-1121 form a localization to the cleavage furrow region. The region spanning Ala-980 to Val-1104 is the PH domain.

As to quaternary structure, interacts with F-actin. Interacts with CD2AP. May interact with RHOA. Interacts with FZR1/CDH1 during mitotic exit. In terms of processing, phosphorylated during mitosis. Ubiquitinated, and this requires FZR1/CDH1.

Its subcellular location is the nucleus. The protein localises to the cytoplasm. The protein resides in the cytoskeleton. It localises to the cell cortex. It is found in the cell projection. Its subcellular location is the bleb. Functionally, required for cytokinesis. Essential for the structural integrity of the cleavage furrow and for completion of cleavage furrow ingression. Plays a role in bleb assembly during metaphase and anaphase of mitosis. May play a significant role in podocyte cell migration. This is Anillin (Anln) from Mus musculus (Mouse).